Consider the following 380-residue polypeptide: Transcription factor RF2a (380 aa).

Residues 1–57 (MNREKSPIPGDGGDGLPPQATRRAGPPAAAAAAEYDISRMPDFPTRNPGHRRAHSEI) form a disordered region. Positions 16-33 (LPPQATRRAGPPAAAAAA) are enriched in low complexity. Residues 56-108 (EILSLPEDLDLCAAGGGDGPSLSDENDEELFSMFLDVEKLNSTCGASSEAEAE) form an activation of RTBV promoter region. The bZIP domain occupies 181–244 (DPKRAKRIWA…SGLTTENSEL (64 aa)). The basic motif stretch occupies residues 183 to 204 (KRAKRIWANRQSAARSKERKMR). The interval 209-244 (LERKVQTLQTEATTLSAQLALLQRDTSGLTTENSEL) is leucine-zipper. Positions 283–357 (GGMMMNFGGM…AQQLQQAARD (75 aa)) are interaction with TBP2. A compositionally biased stretch (low complexity) spans 326–355 (QAQQQQVLHPQHQQQQPLHPLQAQQLQQAA). The tract at residues 326 to 380 (QAQQQQVLHPQHQQQQPLHPLQAQQLQQAARDLKMKSPMGGQSQWGDGKSGSSGN) is disordered.

Belongs to the bZIP family. Binds DNA as a homodimer or as a heterodimer with RF2b. The heterodimer binds stronger to DNA than the homodimer. Interacts with TBP2. Expressed at high levels in levels in leaf sheath, moderate levels in leaf blade, but not in roots. Predominantly expressed in vascular tissues.

It is found in the nucleus. In terms of biological role, transcription factor probably involved in vascular development and shoot tissue organization. Binds to the DNA sequence 5'-CCGAGTGTGCCCCTGG-3' present in the promoter region Box II of the phloem-specific rice tungro bacilliform virus (RTBV) promoter. May regulate tissue-specific expression of the RTBV promoter and virus replication. This is Transcription factor RF2a (RF2a) from Oryza sativa subsp. japonica (Rice).